A 383-amino-acid polypeptide reads, in one-letter code: Probable purine permease 16 (383 aa).

A run of 10 helical transmembrane segments spans residues 30–50, 72–92, 113–133, 138–158, 166–186, 203–223, 247–267, 297–317, 322–342, and 346–363; these read ISVF…MLLL, WTQA…FFIL, VLSL…LYAL, VGWG…SAFI, WIII…PAFA, LILI…QLGF, ICVS…SGEF, VWAV…ADVV, SPVV…EFGW, and GALL…YSLH.

The protein belongs to the purine permeases (TC 2.A.7.14) family.

The protein resides in the membrane. The protein is Probable purine permease 16 (PUP16) of Arabidopsis thaliana (Mouse-ear cress).